Consider the following 481-residue polypeptide: Cerebral cavernous malformations 2 protein-like (481 aa).

Disordered stretches follow at residues 161–193 (PVPA…GTAE) and 214–290 (EARA…DPQN). The span at 184 to 193 (PEKRRVGTAE) shows a compositional bias: basic and acidic residues. Over residues 214–223 (EARAAGGGGS) the composition is skewed to gly residues. Basic and acidic residues predominate over residues 237 to 251 (WERRQTFSGSWERRH).

Belongs to the CCM2 family.

This is Cerebral cavernous malformations 2 protein-like (Ccm2l) from Mus musculus (Mouse).